Reading from the N-terminus, the 138-residue chain is Thyrotropin subunit beta (138 aa).

The first 20 residues, 1 to 20 (MSAAVLLSVLFALACGQAAS), serve as a signal peptide directing secretion. 6 cysteine pairs are disulfide-bonded: Cys22-Cys72, Cys36-Cys87, Cys39-Cys125, Cys47-Cys103, Cys51-Cys105, and Cys108-Cys115. Asn43 carries an N-linked (GlcNAc...) asparagine glycan. The propeptide occupies 133 to 138 (LGGFSV).

This sequence belongs to the glycoprotein hormones subunit beta family. As to quaternary structure, heterodimer of a common alpha chain and a unique beta chain which confers biological specificity to thyrotropin, lutropin, follitropin and gonadotropin.

Its subcellular location is the secreted. In terms of biological role, indispensable for the control of thyroid structure and metabolism. This chain is Thyrotropin subunit beta (Tshb), found in Mus musculus (Mouse).